A 513-amino-acid chain; its full sequence is Putative ADP-ribosyl glycohydrolase L444 (513 aa).

Over residues 1-23 (MSDKIQSRESKTTKPTKTEKISD) the composition is skewed to basic and acidic residues. Positions 1 to 33 (MSDKIQSRESKTTKPTKTEKISDKSGNLSQVKS) are disordered. Polar residues predominate over residues 24–33 (KSGNLSQVKS).

Belongs to the ADP-ribosylglycohydrolase family.

This Acanthamoeba polyphaga mimivirus (APMV) protein is Putative ADP-ribosyl glycohydrolase L444.